Reading from the N-terminus, the 300-residue chain is MGFPVVYHPDYVTPIPEEHRFPMPKFRLLHGLLLEDGVIQPEQVYQPQLPDRAWLELVHEPDYVTAYCQGTLTPKAQRRIGLPWSAGVVQRTLTAVGGTILTAQLALEHGLACNTAGGTHHAFPGYGSGFCILNDLAIATRTIQQRGLAQRILIVDLDVHQGDGTAFIFQDDPTVFTFSMHCEVNFPSQKQRSDLDLGLPEGLDDDGYLQILAHHLEDLLSQVKPDLVFYDAGVDTHVGDRLGKLAMTNTGLYRRERLVLSTCLAAGYPVACVIGGGYAKNIHDLVYRHSLLHRAARDVY.

This sequence belongs to the histone deacetylase family.

In terms of biological role, putative deacetylase. This is an uncharacterized protein from Picosynechococcus sp. (strain ATCC 27264 / PCC 7002 / PR-6) (Agmenellum quadruplicatum).